The sequence spans 266 residues: Chymotrypsin-like elastase family member 1 (266 aa).

The first 16 residues, methionine 1–serine 16, serve as a signal peptide directing secretion. Residues threonine 17–arginine 26 constitute a propeptide, activation peptide. The Peptidase S1 domain maps to valine 27–alanine 264. Residues cysteine 56 and cysteine 72 are joined by a disulfide bond. Histidine 71 acts as the Charge relay system in catalysis. Ca(2+) is bound by residues glutamate 85, asparagine 87, glutamine 90, and glutamate 95. Residue asparagine 87 is glycosylated (N-linked (GlcNAc...) asparagine). Aspartate 119 acts as the Charge relay system in catalysis. 3 cysteine pairs are disulfide-bonded: cysteine 153/cysteine 220, cysteine 184/cysteine 200, and cysteine 210/cysteine 240. Catalysis depends on serine 214, which acts as the Charge relay system. Asparagine 241 is a glycosylation site (N-linked (GlcNAc...) asparagine).

Belongs to the peptidase S1 family. Elastase subfamily. The cofactor is Ca(2+).

Its subcellular location is the secreted. It catalyses the reaction Hydrolysis of proteins, including elastin. Preferential cleavage: Ala-|-Xaa.. In terms of biological role, serine proteases that hydrolyze many proteins in addition to elastin. The chain is Chymotrypsin-like elastase family member 1 (CELA1) from Felis catus (Cat).